Reading from the N-terminus, the 1231-residue chain is ATP-dependent RNA helicase DHX30 (1231 aa).

The tract at residues proline 39–alanine 65 is disordered. 2 DRBM domains span residues proline 80–phenylalanine 148 and proline 292–leucine 359. The Helicase ATP-binding domain maps to leucine 488 to proline 656. Glycine 501–threonine 508 contacts ATP. A DEAH box motif is present at residues aspartate 603–histidine 606. The Helicase C-terminal domain occupies leucine 697–methionine 870.

Belongs to the DEAD box helicase family. DEAH subfamily.

The protein localises to the cytoplasm. It localises to the mitochondrion. It is found in the mitochondrion matrix. The protein resides in the mitochondrion nucleoid. It carries out the reaction ATP + H2O = ADP + phosphate + H(+). Its function is as follows. RNA-dependent helicase. Plays an important role in the assembly of the mitochondrial large ribosomal subunit. Required for optimal function of the zinc-finger antiviral protein ZC3HAV1. Associates with mitochondrial DNA. Involved in nervous system development and differentiation through its involvement in the up-regulation of a number of genes which are required for neurogenesis, including GSC, NCAM1, neurogenin, and NEUROD. The chain is ATP-dependent RNA helicase DHX30 (DHX30) from Gallus gallus (Chicken).